The chain runs to 422 residues: Light-independent protochlorophyllide reductase subunit N (422 aa).

Residues cysteine 26, cysteine 51, and cysteine 112 each contribute to the [4Fe-4S] cluster site.

It belongs to the BchN/ChlN family. Protochlorophyllide reductase is composed of three subunits; BchL, BchN and BchB. Forms a heterotetramer of two BchB and two BchN subunits. [4Fe-4S] cluster serves as cofactor.

The enzyme catalyses chlorophyllide a + oxidized 2[4Fe-4S]-[ferredoxin] + 2 ADP + 2 phosphate = protochlorophyllide a + reduced 2[4Fe-4S]-[ferredoxin] + 2 ATP + 2 H2O. It participates in porphyrin-containing compound metabolism; bacteriochlorophyll biosynthesis (light-independent). Functionally, component of the dark-operative protochlorophyllide reductase (DPOR) that uses Mg-ATP and reduced ferredoxin to reduce ring D of protochlorophyllide (Pchlide) to form chlorophyllide a (Chlide). This reaction is light-independent. The NB-protein (BchN-BchB) is the catalytic component of the complex. The protein is Light-independent protochlorophyllide reductase subunit N of Acidiphilium rubrum.